The sequence spans 680 residues: DNA-directed RNA polymerase subunit beta' (680 aa).

The Zn(2+) site is built by C69, C71, C87, and C90. D489, D491, and D493 together coordinate Mg(2+).

Belongs to the RNA polymerase beta' chain family. RpoC1 subfamily. In terms of assembly, in plastids the minimal PEP RNA polymerase catalytic core is composed of four subunits: alpha, beta, beta', and beta''. When a (nuclear-encoded) sigma factor is associated with the core the holoenzyme is formed, which can initiate transcription. Mg(2+) is required as a cofactor. It depends on Zn(2+) as a cofactor.

The protein resides in the plastid. The protein localises to the chloroplast. It carries out the reaction RNA(n) + a ribonucleoside 5'-triphosphate = RNA(n+1) + diphosphate. In terms of biological role, DNA-dependent RNA polymerase catalyzes the transcription of DNA into RNA using the four ribonucleoside triphosphates as substrates. The polypeptide is DNA-directed RNA polymerase subunit beta' (Amborella trichopoda).